We begin with the raw amino-acid sequence, 87 residues long: Small ribosomal subunit protein bS20 (87 aa).

Residues 1 to 27 form a disordered region; the sequence is MANIKSAKKRAVTSEKRRKHNASRRSM.

Belongs to the bacterial ribosomal protein bS20 family.

Its function is as follows. Binds directly to 16S ribosomal RNA. In Erwinia tasmaniensis (strain DSM 17950 / CFBP 7177 / CIP 109463 / NCPPB 4357 / Et1/99), this protein is Small ribosomal subunit protein bS20.